Consider the following 418-residue polypeptide: Serine hydroxymethyltransferase (418 aa).

(6S)-5,6,7,8-tetrahydrofolate-binding positions include Leu-120 and 124–126; that span reads GHL. Position 229 is an N6-(pyridoxal phosphate)lysine (Lys-229). 353 to 355 contacts (6S)-5,6,7,8-tetrahydrofolate; it reads SPF.

The protein belongs to the SHMT family. Homodimer. Requires pyridoxal 5'-phosphate as cofactor.

The protein resides in the cytoplasm. It catalyses the reaction (6R)-5,10-methylene-5,6,7,8-tetrahydrofolate + glycine + H2O = (6S)-5,6,7,8-tetrahydrofolate + L-serine. The protein operates within one-carbon metabolism; tetrahydrofolate interconversion. Its pathway is amino-acid biosynthesis; glycine biosynthesis; glycine from L-serine: step 1/1. Catalyzes the reversible interconversion of serine and glycine with tetrahydrofolate (THF) serving as the one-carbon carrier. This reaction serves as the major source of one-carbon groups required for the biosynthesis of purines, thymidylate, methionine, and other important biomolecules. Also exhibits THF-independent aldolase activity toward beta-hydroxyamino acids, producing glycine and aldehydes, via a retro-aldol mechanism. This is Serine hydroxymethyltransferase from Psychrobacter sp. (strain PRwf-1).